The sequence spans 450 residues: tRNA modification GTPase MnmE (450 aa).

The (6S)-5-formyl-5,6,7,8-tetrahydrofolate site is built by Arg-20, Glu-78, and Lys-117. The TrmE-type G domain occupies 211–372 (GFRMVIVGKP…LEEAIYRETQ (162 aa)). Residue Asn-221 participates in K(+) binding. Residues 221-226 (NVGKST), 240-246 (TDIPGTT), and 265-268 (DTAG) each bind GTP. Ser-225 lines the Mg(2+) pocket. Thr-240, Ile-242, and Thr-245 together coordinate K(+). Mg(2+) is bound at residue Thr-246. A (6S)-5-formyl-5,6,7,8-tetrahydrofolate-binding site is contributed by Lys-450.

The protein belongs to the TRAFAC class TrmE-Era-EngA-EngB-Septin-like GTPase superfamily. TrmE GTPase family. As to quaternary structure, homodimer. Heterotetramer of two MnmE and two MnmG subunits. K(+) serves as cofactor.

The protein resides in the cytoplasm. In terms of biological role, exhibits a very high intrinsic GTPase hydrolysis rate. Involved in the addition of a carboxymethylaminomethyl (cmnm) group at the wobble position (U34) of certain tRNAs, forming tRNA-cmnm(5)s(2)U34. The polypeptide is tRNA modification GTPase MnmE (Thermotoga petrophila (strain ATCC BAA-488 / DSM 13995 / JCM 10881 / RKU-1)).